Here is a 540-residue protein sequence, read N- to C-terminus: Cytokinin dehydrogenase 5 (540 aa).

Residues 1–22 form the signal peptide; the sequence is MNREMTSSFLLLTFAICKLIIA. Positions 63-241 constitute an FAD-binding PCMH-type domain; sequence SPEEPLAVLH…TRARISLEPA (179 aa). FAD is bound by residues A97, G99, and G101. Pros-8alpha-FAD histidine is present on H102. 7 residues coordinate FAD: S103, Q107, D165, T170, S176, I180, and I231. N-linked (GlcNAc...) asparagine glycosylation is found at N310 and N406. Residues Y479 and Q517 each coordinate FAD.

Belongs to the oxygen-dependent FAD-linked oxidoreductase family. The cofactor is FAD. As to expression, expressed in the developing leaf petioles and in the rib zone of the axillary shoot meristems. In roots, expressed in the vascular cylinder within the root apical meristem and only faintly detectable in the differentiated root.

Its subcellular location is the secreted. It is found in the extracellular space. The enzyme catalyses N(6)-dimethylallyladenine + A + H2O = 3-methyl-2-butenal + adenine + AH2. In terms of biological role, catalyzes the oxidation of cytokinins, a family of N(6)-substituted adenine derivatives that are plant hormones, where the substituent is an isopentenyl group. In association with CKX3 regulates the activity of the reproductive meristems, flower organ size and ovule formation. In Arabidopsis thaliana (Mouse-ear cress), this protein is Cytokinin dehydrogenase 5 (CKX5).